The chain runs to 81 residues: Acyl carrier protein (81 aa).

In terms of domain architecture, Carrier spans 3-78 (QEIFDKIKNI…EAVNIIAEKT (76 aa)). S38 is subject to O-(pantetheine 4'-phosphoryl)serine.

It belongs to the acyl carrier protein (ACP) family. In terms of processing, 4'-phosphopantetheine is transferred from CoA to a specific serine of apo-ACP by AcpS. This modification is essential for activity because fatty acids are bound in thioester linkage to the sulfhydryl of the prosthetic group.

It localises to the cytoplasm. Its pathway is lipid metabolism; fatty acid biosynthesis. Functionally, carrier of the growing fatty acid chain in fatty acid biosynthesis. This is Acyl carrier protein from Picosynechococcus sp. (strain ATCC 27264 / PCC 7002 / PR-6) (Agmenellum quadruplicatum).